The chain runs to 348 residues: Holliday junction branch migration complex subunit RuvB (348 aa).

A large ATPase domain (RuvB-L) region spans residues 1-184 (MTLNRDMVSP…FGIVQRLEFY (184 aa)). Residues L23, R24, G65, K68, T69, T70, R174, Y184, and R221 each contribute to the ATP site. T69 is a Mg(2+) binding site. The interval 185–255 (AVDHLVLIVE…VAQKALDLLD (71 aa)) is small ATPAse domain (RuvB-S). The segment at 258 to 348 (SHGFDTMDRK…QEVSDLFPNE (91 aa)) is head domain (RuvB-H). 3 residues coordinate DNA: R294, R313, and R318.

The protein belongs to the RuvB family. In terms of assembly, homohexamer. Forms an RuvA(8)-RuvB(12)-Holliday junction (HJ) complex. HJ DNA is sandwiched between 2 RuvA tetramers; dsDNA enters through RuvA and exits via RuvB. An RuvB hexamer assembles on each DNA strand where it exits the tetramer. Each RuvB hexamer is contacted by two RuvA subunits (via domain III) on 2 adjacent RuvB subunits; this complex drives branch migration. In the full resolvosome a probable DNA-RuvA(4)-RuvB(12)-RuvC(2) complex forms which resolves the HJ.

It is found in the cytoplasm. The enzyme catalyses ATP + H2O = ADP + phosphate + H(+). Its function is as follows. The RuvA-RuvB-RuvC complex processes Holliday junction (HJ) DNA during genetic recombination and DNA repair, while the RuvA-RuvB complex plays an important role in the rescue of blocked DNA replication forks via replication fork reversal (RFR). RuvA specifically binds to HJ cruciform DNA, conferring on it an open structure. The RuvB hexamer acts as an ATP-dependent pump, pulling dsDNA into and through the RuvAB complex. RuvB forms 2 homohexamers on either side of HJ DNA bound by 1 or 2 RuvA tetramers; 4 subunits per hexamer contact DNA at a time. Coordinated motions by a converter formed by DNA-disengaged RuvB subunits stimulates ATP hydrolysis and nucleotide exchange. Immobilization of the converter enables RuvB to convert the ATP-contained energy into a lever motion, pulling 2 nucleotides of DNA out of the RuvA tetramer per ATP hydrolyzed, thus driving DNA branch migration. The RuvB motors rotate together with the DNA substrate, which together with the progressing nucleotide cycle form the mechanistic basis for DNA recombination by continuous HJ branch migration. Branch migration allows RuvC to scan DNA until it finds its consensus sequence, where it cleaves and resolves cruciform DNA. The chain is Holliday junction branch migration complex subunit RuvB from Nitrosococcus oceani (strain ATCC 19707 / BCRC 17464 / JCM 30415 / NCIMB 11848 / C-107).